Reading from the N-terminus, the 293-residue chain is Epimerase family protein SDR39U1 (293 aa).

NADP(+)-binding positions include 31–32 (SR), 58–59 (LA), Glu-77, Arg-82, and Val-160.

The protein belongs to the NAD(P)-dependent epimerase/dehydratase family. SDR39U1 subfamily.

Functionally, putative NADP-dependent oxidoreductase. In Mus musculus (Mouse), this protein is Epimerase family protein SDR39U1 (Sdr39u1).